The following is a 224-amino-acid chain: Cytidylate kinase (224 aa).

11–19 contacts ATP; the sequence is GPAAAGKST.

This sequence belongs to the cytidylate kinase family. Type 1 subfamily.

It localises to the cytoplasm. It carries out the reaction CMP + ATP = CDP + ADP. It catalyses the reaction dCMP + ATP = dCDP + ADP. This Listeria monocytogenes serotype 4b (strain CLIP80459) protein is Cytidylate kinase.